Reading from the N-terminus, the 520-residue chain is GMP synthase [glutamine-hydrolyzing] (520 aa).

A Glutamine amidotransferase type-1 domain is found at 13 to 205 (KIIVLDYGSQ…ALNICKAKGD (193 aa)). Residue C90 is the Nucleophile of the active site. Active-site residues include H179 and E181. The region spanning 206–395 (WSMDNFIDMQ…LGMPDHIVWR (190 aa)) is the GMPS ATP-PPase domain. 233 to 239 (SGGVDSS) lines the ATP pocket.

As to quaternary structure, homodimer.

The enzyme catalyses XMP + L-glutamine + ATP + H2O = GMP + L-glutamate + AMP + diphosphate + 2 H(+). The protein operates within purine metabolism; GMP biosynthesis; GMP from XMP (L-Gln route): step 1/1. Functionally, catalyzes the synthesis of GMP from XMP. This chain is GMP synthase [glutamine-hydrolyzing], found in Streptococcus pneumoniae (strain ATCC 700669 / Spain 23F-1).